We begin with the raw amino-acid sequence, 482 residues long: UDP-N-acetylmuramate--L-alanine ligase (482 aa).

115 to 121 (GTHGKTT) lines the ATP pocket.

Belongs to the MurCDEF family.

It is found in the cytoplasm. The catalysed reaction is UDP-N-acetyl-alpha-D-muramate + L-alanine + ATP = UDP-N-acetyl-alpha-D-muramoyl-L-alanine + ADP + phosphate + H(+). Its pathway is cell wall biogenesis; peptidoglycan biosynthesis. Its function is as follows. Cell wall formation. The sequence is that of UDP-N-acetylmuramate--L-alanine ligase from Rhodospirillum centenum (strain ATCC 51521 / SW).